The chain runs to 90 residues: Small ribosomal subunit protein bS16 (90 aa).

This sequence belongs to the bacterial ribosomal protein bS16 family.

The polypeptide is Small ribosomal subunit protein bS16 (Streptococcus pneumoniae serotype 19F (strain G54)).